Here is a 1343-residue protein sequence, read N- to C-terminus: Protein cordon-bleu (1343 aa).

Disordered stretches follow at residues 1–51 (MNLG…GDCK), 301–479 (KVEL…PAAE), 522–613 (VSVA…NGYE), 733–808 (IDKP…TRVL), 1056–1077 (EKPTSSERISTLHGGDKTKSLD), and 1105–1148 (INNF…NVFG). Over residues 20 to 30 (APPPPRPPQPA) the composition is skewed to pro residues. Residues 305 to 310 (KKRRAP) carry the KKRRAP 1 motif. The span at 324-335 (SQISLGSPSSHN) shows a compositional bias: polar residues. The KKRRAP 2 motif lies at 338–343 (KKRKAP). Residues 343–354 (PAPPPTPPPSTP) show a composition bias toward pro residues. Basic and acidic residues predominate over residues 390–400 (DLSHSIEDSEP). Positions 406 to 422 (SSSSGDDAAAVGSSSSS) are enriched in low complexity. Basic and acidic residues predominate over residues 445–460 (PEPKPEYEPELKKEAS). Polar residues predominate over residues 552–573 (ERMQSVSPMDIMSLNSDSTLPV). Residues 746–757 (PSQDAKITDNME) show a composition bias toward basic and acidic residues. Residues 773–789 (VELTSQKDTVLQKSQSF) show a composition bias toward polar residues. Residues 1105–1122 (INNFPDTSSARQTPTDTT) are compositionally biased toward polar residues. Residues 1128 to 1137 (KKPELHKSEI) are compositionally biased toward basic and acidic residues. WH2 domains lie at 1167-1187 (IHSSLMEAIQSGEGIERLRKV) and 1207-1227 (ERSALLSAIRASSTSAKLKKT). The tract at residues 1246–1297 (NVHTEVISPRPTSPDFVPPLPPSFSPPPPPPPPLAPAKPPVVLPPGGNPEAA) is disordered. Over residues 1261 to 1292 (FVPPLPPSFSPPPPPPPPLAPAKPPVVLPPGG) the composition is skewed to pro residues. Positions 1297–1317 (AREALLEAIRSGSGAQQLRKV) constitute a WH2 3 domain.

In terms of assembly, interacts with pacsin1.

The protein resides in the cell membrane. It localises to the cytoplasm. Its subcellular location is the cytoskeleton. The protein localises to the cell projection. It is found in the ruffle. The protein resides in the cytosol. Functionally, plays an important role in the reorganization of the actin cytoskeleton. Binds to and sequesters actin monomers (G actin). Nucleates actin polymerization by assembling three actin monomers in cross-filament orientation and thereby promotes growth of actin filaments at the barbed end. Can also mediate actin depolymerization at barbed ends and severing of actin filaments. Promotes formation of cell ruffles. Regulates neuron morphogenesis and increases branching of axons and dendrites. Required for normal embryonic development, including normal development of laterality, normal body size and shape, as well as normal brain, heart and kidney development. Required for normal development of stereocilia and kinocilia in sensory hair cells of neuromasts in the posterior lateral line organ, and thus also for balance keeping and normal swimming behavior. This is Protein cordon-bleu (cobl) from Danio rerio (Zebrafish).